The primary structure comprises 1079 residues: Capping protein inhibiting regulator of actin dynamics (1079 aa).

Residues 1–11 (MSQENVSDKVR) show a composition bias toward basic and acidic residues. 7 disordered regions span residues 1–293 (MSQE…EEER), 308–327 (ERKR…AEKR), 341–383 (EHRI…EWKR), 420–453 (PVTP…PTLS), 493–522 (EGKK…VFES), 606–639 (IFGQ…VQSR), and 658–1054 (PSFL…TTQV). Acidic residues predominate over residues 36 to 45 (DEGSSDEEEV). Residues 64 to 76 (SAKEKSVSHDTVQ) show a composition bias toward basic and acidic residues. Basic residues predominate over residues 115–134 (AKHKLSVKPKNQRVSRKHRR). Over residues 140 to 158 (HEDDFSEIQEEFEKDEEVF) the composition is skewed to acidic residues. Residues 159-293 (DSSREDYGII…EERKRAEEER (135 aa)) show a composition bias toward basic and acidic residues. A compositionally biased stretch (polar residues) spans 420-434 (PVTPATGQQGETTAE). Positions 670-682 (PKSQRSESGSPIQ) are enriched in polar residues. Residues 684–695 (ESEDSDTKDEDG) show a composition bias toward acidic residues. The span at 756–781 (DNSTLSEKSSPISPQQENIEFQTTVA) shows a compositional bias: polar residues. 2 stretches are compositionally biased toward basic and acidic residues: residues 896-930 (WREK…DKET) and 944-983 (GFRE…EDKG). Over residues 984-993 (NGSSSIISKH) the composition is skewed to polar residues. Over residues 994–1016 (QTADENKRPDTLLARFERRDNLK) the composition is skewed to basic and acidic residues. The span at 1020–1033 (TLPSSVTVEITDST) shows a compositional bias: polar residues.

As to quaternary structure, directly interacts with actin-capping proteins; this interaction decreases the binding of capping proteins to actin.

Its subcellular location is the cytoplasm. It is found in the cytosol. Functionally, involved in epithelial cell integrity by acting on the maintenance of the actin cytoskeleton. Positively regulates the actin polymerization, by inhibiting the interaction of actin-capping proteins with actin. This chain is Capping protein inhibiting regulator of actin dynamics (crad), found in Danio rerio (Zebrafish).